The primary structure comprises 267 residues: PF03932 family protein CutC (267 aa).

It belongs to the CutC family.

The protein resides in the cytoplasm. This is PF03932 family protein CutC from Xylella fastidiosa (strain 9a5c).